Consider the following 190-residue polypeptide: MSSSALTCGSTLEKSGDTWEMKALDSSRLVPWPPRGLGSSTQHPNKPHCALASCQGPGVLPGAASALPELTFQGDVCQSETCQRYLQAAISLDIAVSQINLLGRPSSPPALLIQQGSCEQVIHNSTPQFLGMEDGDNERTTGWLWRLCEDIDAEPSSTGCSRSNQLTFTEGCFVRSLSTVYSNTHIHTHL.

Expressed in testis.

The protein is Spermatogenesis-associated protein 12 (SPATA12) of Homo sapiens (Human).